A 595-amino-acid chain; its full sequence is uncharacterized protein (595 aa).

3 disordered regions span residues 50-159, 398-430, and 450-595; these read VNPS…KTKK, TYPT…PPSL, and VTEG…SLDK. Over residues 83–122 the composition is skewed to low complexity; the sequence is SNKSSALKKSNKSSNKSSNKSSNKSSNKSSNKSSNKSSNK. Residues 123–132 are compositionally biased toward basic and acidic residues; sequence FPDKSDKSDS. Positions 137 to 146 are enriched in acidic residues; that stretch reads DNSDDSDDSS. The segment covering 398–409 has biased composition (low complexity); it reads TYPTTPLFSEPT. Residues 410–420 show a composition bias toward pro residues; that stretch reads IPKPPQQPTTE. Over residues 421-430 the composition is skewed to low complexity; it reads PPSGFKPPSL. Positions 454–463 are enriched in basic and acidic residues; sequence KVVESDDHTS. Positions 467 to 476 are enriched in pro residues; it reads IPPPPPPPPS. Low complexity predominate over residues 477-529; that stretch reads ISSDNSSPNKSVKSSTKSSTKSSTKSSTKSSTKSSTKSPSKTPVKSPIKSSSK. Over residues 530–542 the composition is skewed to basic and acidic residues; that stretch reads LSDKKSPTKKIES. Positions 544–553 are enriched in acidic residues; the sequence is GESDSESDSE. Residues 559 to 570 are compositionally biased toward basic residues; that stretch reads TKKSTNKIKKIT. Low complexity predominate over residues 571-580; it reads NNKLENSNTK. The segment covering 581–595 has biased composition (basic residues); that stretch reads NNKKFSKKKTISLDK.

This is an uncharacterized protein from Acanthamoeba polyphaga mimivirus (APMV).